The following is a 370-amino-acid chain: Peptide chain release factor 1 (370 aa).

Glutamine 239 bears the N5-methylglutamine mark.

The protein belongs to the prokaryotic/mitochondrial release factor family. In terms of processing, methylated by PrmC. Methylation increases the termination efficiency of RF1.

Its subcellular location is the cytoplasm. Its function is as follows. Peptide chain release factor 1 directs the termination of translation in response to the peptide chain termination codons UAG and UAA. The sequence is that of Peptide chain release factor 1 from Bacteroides fragilis (strain ATCC 25285 / DSM 2151 / CCUG 4856 / JCM 11019 / LMG 10263 / NCTC 9343 / Onslow / VPI 2553 / EN-2).